The following is a 410-amino-acid chain: D-3-phosphoglycerate dehydrogenase (410 aa).

NAD(+)-binding positions include 161 to 162 (HI), aspartate 181, 238 to 240 (ASR), and aspartate 264. The active site involves arginine 240. Glutamate 269 is an active-site residue. Histidine 292 serves as the catalytic Proton donor. Residue 292–295 (HIGG) coordinates NAD(+). One can recognise an ACT domain in the interval 339-410 (RLMHIHENRP…PGTIRARLLY (72 aa)).

This sequence belongs to the D-isomer specific 2-hydroxyacid dehydrogenase family. As to quaternary structure, homotetramer.

The catalysed reaction is (2R)-3-phosphoglycerate + NAD(+) = 3-phosphooxypyruvate + NADH + H(+). It catalyses the reaction (R)-2-hydroxyglutarate + NAD(+) = 2-oxoglutarate + NADH + H(+). It participates in amino-acid biosynthesis; L-serine biosynthesis; L-serine from 3-phospho-D-glycerate: step 1/3. In bacteria displays feedback inhibition by L-serine. Functionally, catalyzes the reversible oxidation of 3-phospho-D-glycerate to 3-phosphonooxypyruvate, the first step of the phosphorylated L-serine biosynthesis pathway. Also catalyzes the reversible oxidation of 2-hydroxyglutarate to 2-oxoglutarate. This chain is D-3-phosphoglycerate dehydrogenase (serA), found in Escherichia coli O6:H1 (strain CFT073 / ATCC 700928 / UPEC).